We begin with the raw amino-acid sequence, 45 residues long: Thymosin beta-15A homolog (45 aa).

A disordered region spans residues Lys19–Ser45. Basic and acidic residues predominate over residues Thr21–Ser45.

This sequence belongs to the thymosin beta family.

It localises to the cytoplasm. The protein resides in the cytoskeleton. In terms of biological role, plays an important role in the organization of the cytoskeleton. Binds to and sequesters actin monomers (G actin) and therefore inhibits actin polymerization. The polypeptide is Thymosin beta-15A homolog (Coturnix japonica (Japanese quail)).